The sequence spans 418 residues: 3-isopropylmalate dehydratase large subunit (418 aa).

[4Fe-4S] cluster-binding residues include C298, C358, and C361.

It belongs to the aconitase/IPM isomerase family. LeuC type 2 subfamily. As to quaternary structure, heterodimer of LeuC and LeuD. The cofactor is [4Fe-4S] cluster.

The catalysed reaction is (2R,3S)-3-isopropylmalate = (2S)-2-isopropylmalate. The protein operates within amino-acid biosynthesis; L-leucine biosynthesis; L-leucine from 3-methyl-2-oxobutanoate: step 2/4. Catalyzes the isomerization between 2-isopropylmalate and 3-isopropylmalate, via the formation of 2-isopropylmaleate. In Thermoanaerobacter sp. (strain X514), this protein is 3-isopropylmalate dehydratase large subunit.